We begin with the raw amino-acid sequence, 1442 residues long: MVHNNDGDNNDQEMQEIGINEKRSQFPHISVEESRQEFDSFSNNIEGESKQFGMNRDAESNMAVESEEDFKLRKYFENSNRMHLENGGNEKKMGVSIRNLTVVGLGADASVIADMSTPFYGLVKLFTPSFWTKKTSTFDILHDVTTFCKDGEMVLVLGRPGAGCSTLLRVIANQTASYVSVKGDITYGGIPSKEFEKYRGEPIYTPEEDSHHPTLTVRETLDFALKCKTPGNRLPDETKRSFRDKVFNLLLSMFGIVHQADTIVGNEFIRGLSGGERKRLTITEAMVSSASITCWDCSTRGLDAASAFDYAKSIRIMSDTLHKTTIASFYQASDSIYNVFDKVCVLEKGRCIYFGPVGMAKQYFMSLGFDCEPRKSTPDFLTGVTNPQERIIKKGFEGRTPETSADFEEAWKNSDIYRDQLQEQKEYEELIERTQPKVAFVQEVRDANSKTNFKKSQYTTSFVTQVIALIKRNFALVLNDKFGMYSKYLSVLIQGFVYASLFYNMDTDITGLFTRGGAILSAVIFNAFLSIGEMAMTFYGRRVLQKHKSYALYRPSALHIAQVVTDIPFTAIQVFLFSIIAYFMFGLQYDAGKFFIFCFTLLGASLACTALFRCFGYLCPSMYIAQNISNVFIIFMLTYSGYTIPIPKMHPWFSWFRHINIFTYAFKALMANEFEGLDFNCKESAIPYGPAYQGSEFDAYRICPLGGIEQGSLYFKGDFYMDKTLSFATGEMSQNVIIVYCWWVFFVVCNMFAMEYIDHTSGGYTHKVYKKGKAPKMNDVEEEKQQNAIVAKATSNMKDTLHMDGGIFTWQNIRYTVKVPGGERLLLDNIEGWIKPGQMTALMGSSGAGKTTLLDVLAKRKTLGVVEGDSHLNGRELEIDFERITGYVEQMDVHNPGLTVREALRFSAKLRQEPEVSLEEKFKYVEHVLEMMEMKHLGDALIGTLETGVGISVEERKRLTIGVELVAKPQILFLDEPTSGLDAQSSYNIIKFIRKLADAGMPLVCTIHQPSSVLFEHFDRILLLAKGGKTVYFGDIGEKSKTLTSYFERHGVRPCTESENPAEYILEATGAGVHGKSDVNWPEAWKQSPELADISRELAALKEQGAQQYKPRSDGPAREFSQSTWYQTKEVYKRLNLIWWRDPYYTYGSFVQAALCGLIIGFTFWNLQGSSSDMNQRIFFIFEALMLGILLIFVVMPQLIIQREYFKRDFASKFYSWFPFAISIVVVELPFIVISGTIFFFCSFWTAGLHKTSDDEQTFYFWFIFIIFMFFCVSFGQAVAAVCINMFFAMTLIPLLIVFLFLFCGVMVPPSSIPTFWRGWVYHLNPCRYFMEGIITNILKTVRVECSEEDMAIFTFPKSYNTCQNYTSAFQSYKPSGYVESATLNGEPACGYCIYKNGEEYYETLGWSADNRWRNVGIIIGFFVFNILMVILFVYLTRKGSR.

The 249-residue stretch at 125–373 (LFTPSFWTKK…FMSLGFDCEP (249 aa)) folds into the ABC transporter 1 domain. The region spanning 478–718 (LNDKFGMYSK…EQGSLYFKGD (241 aa)) is the ABC transmembrane type-2 1 domain. Helical transmembrane passes span 482 to 502 (FGMY…ASLF), 518 to 538 (AILS…AMTF), 567 to 587 (IPFT…MFGL), 592 to 612 (GKFF…TALF), 627 to 647 (NISN…IPIP), and 737 to 757 (IIVY…MEYI). The 245-residue stretch at 808–1052 (FTWQNIRYTV…LTSYFERHGV (245 aa)) folds into the ABC transporter 2 domain. 844 to 851 (GSSGAGKT) serves as a coordination point for ATP. The ABC transmembrane type-2 2 domain occupies 1144–1369 (YYTYGSFVQA…YNTCQNYTSA (226 aa)). Helical transmembrane passes span 1147–1167 (YGSF…FWNL), 1181–1201 (IFEA…QLII), 1220–1240 (FAIS…TIFF), 1259–1279 (FYFW…GQAV), 1286–1306 (MFFA…FCGV), and 1416–1436 (VGII…FVYL).

The protein belongs to the ABC transporter superfamily. ABCG family. PDR (TC 3.A.1.205) subfamily.

Its subcellular location is the membrane. This chain is ABC transporter G family member 11 (abcG11), found in Dictyostelium discoideum (Social amoeba).